Here is a 463-residue protein sequence, read N- to C-terminus: Major capsid protein (463 aa).

Belongs to the NCLDV major capsid protein family. As to quaternary structure, homotrimer.

It is found in the virion. Functionally, major capsid protein that self assembles to form an icosahedral capsid. Represents around 50% of the total virion protein mass. In Rana tigrina ranavirus, this protein is Major capsid protein (MCP).